The primary structure comprises 327 residues: Peroxidase N (327 aa).

The first 28 residues, 1-28, serve as a signal peptide directing secretion; sequence MKTQTKVMGGHVLLTVFTLCMLCSAVRA. Position 29 is a pyrrolidone carboxylic acid (Q29). Cystine bridges form between C39-C116, C72-C77, C122-C323, and C200-C232. The active-site Proton acceptor is H70. Ca(2+)-binding residues include D71, V74, G76, D78, and S80. N-linked (GlcNAc...) asparagine glycosylation occurs at N155. A substrate-binding site is contributed by P163. An N-linked (GlcNAc...) asparagine glycan is attached at N182. Position 193 (H193) interacts with heme b. T194 is a binding site for Ca(2+). Residues N209 and N239 are each glycosylated (N-linked (GlcNAc...) asparagine). D245 is a Ca(2+) binding site. N-linked (GlcNAc...) asparagine glycosylation occurs at N247. The Ca(2+) site is built by S248 and D253. N281 carries an N-linked (GlcNAc...) asparagine glycan.

The protein belongs to the peroxidase family. Classical plant (class III) peroxidase subfamily. It depends on Ca(2+) as a cofactor. The cofactor is heme b.

The protein localises to the secreted. The catalysed reaction is 2 a phenolic donor + H2O2 = 2 a phenolic radical donor + 2 H2O. Removal of H(2)O(2), oxidation of toxic reductants, biosynthesis and degradation of lignin, suberization, auxin catabolism, response to environmental stresses such as wounding, pathogen attack and oxidative stress. These functions might be dependent on each isozyme/isoform in each plant tissue. The protein is Peroxidase N (HRPN) of Armoracia rusticana (Horseradish).